The following is a 779-amino-acid chain: Membrane metallo-endopeptidase-like 1 (779 aa).

At 1-27 (MGKSEGPVGMVESAGRAGQKRPGFLEG) the chain is on the cytoplasmic side. The chain crosses the membrane as a helical; Signal-anchor for type II membrane protein span at residues 28–48 (GLLLLLLLVTAALVALGVLYA). Topologically, residues 49 to 779 (DRRGKQLPRL…MHPKERCRVW (731 aa)) are lumenal. Residues 88–779 (VCTTPGCVIA…MHPKERCRVW (692 aa)) enclose the Peptidase M13 domain. Disulfide bonds link Cys89–Cys94, Cys112–Cys764, Cys120–Cys724, Cys175–Cys439, and Cys650–Cys776. Arg135 contributes to the a peptide binding site. N-linked (GlcNAc...) asparagine glycosylation is found at Asn177, Asn207, Asn350, and Asn530. Residues 515 to 560 (LEEMNRRLDEEYSNLNFSEDLYFENSLQNLKVGAQRSLRKLREKVD) adopt a coiled-coil conformation. His613 contacts Zn(2+). The active site involves Glu614. His617 is a Zn(2+) binding site. Residue Asn657 is glycosylated (N-linked (GlcNAc...) asparagine). Glu676 is a Zn(2+) binding site. Residue Asp680 is the Proton donor of the active site.

Belongs to the peptidase M13 family. The cofactor is Zn(2+). Post-translationally, N-glycosylated. Predominantly expressed in testis. Weakly expressed in brain, kidney and heart.

It is found in the membrane. The protein resides in the secreted. It carries out the reaction Preferential cleavage of polypeptides between hydrophobic residues, particularly with Phe or Tyr at P1'.. Inhibited by thiorphan and phosphoramidon. Metalloprotease involved in sperm function, possibly by modulating the processes of fertilization and early embryonic development. Degrades a broad variety of small peptides with a preference for peptides shorter than 3 kDa containing neutral bulky aliphatic or aromatic amino acid residues. Shares the same substrate specificity with MME and cleaves peptides at the same amide bond. The sequence is that of Membrane metallo-endopeptidase-like 1 (MMEL1) from Homo sapiens (Human).